The chain runs to 166 residues: Phosphodiesterase MJ0936 (166 aa).

7 residues coordinate Mn(2+): D8, H10, D36, N59, H97, H120, and H122. D8, H10, D36, N59, H97, H120, and H122 together coordinate Ni(2+).

Belongs to the metallophosphoesterase superfamily. YfcE family. As to quaternary structure, monomer. Ni(2+) is required as a cofactor. The cofactor is Mn(2+).

With respect to regulation, competitively inhibited by phosphate. Its function is as follows. Shows phosphodiesterase activity. Hydrolyzes phosphodiesters bonds in the artificial chromogenic substrates bis-p-nitrophenyl phosphate (bis-pNPP), and less efficiently thymidine 5'-monophosphate p-nitrophenyl ester (pNP-TMP) and p-nitrophenylphosphorylcholine (pNPPC). No catalytic activity was found toward cAMP or cGMP, nucleotides or phospholipase substrates such as phosphatidylcholine. The physiological substrate is unknown. The polypeptide is Phosphodiesterase MJ0936 (Methanocaldococcus jannaschii (strain ATCC 43067 / DSM 2661 / JAL-1 / JCM 10045 / NBRC 100440) (Methanococcus jannaschii)).